The chain runs to 360 residues: Chorismate synthase (360 aa).

NADP(+)-binding residues include Arg-48 and Arg-54. FMN contacts are provided by residues 125–127 (RSS), 246–247 (NA), Gly-286, 301–305 (KPTSS), and Arg-327.

The protein belongs to the chorismate synthase family. Homotetramer. It depends on FMNH2 as a cofactor.

It carries out the reaction 5-O-(1-carboxyvinyl)-3-phosphoshikimate = chorismate + phosphate. Its pathway is metabolic intermediate biosynthesis; chorismate biosynthesis; chorismate from D-erythrose 4-phosphate and phosphoenolpyruvate: step 7/7. Functionally, catalyzes the anti-1,4-elimination of the C-3 phosphate and the C-6 proR hydrogen from 5-enolpyruvylshikimate-3-phosphate (EPSP) to yield chorismate, which is the branch point compound that serves as the starting substrate for the three terminal pathways of aromatic amino acid biosynthesis. This reaction introduces a second double bond into the aromatic ring system. In Actinobacillus succinogenes (strain ATCC 55618 / DSM 22257 / CCUG 43843 / 130Z), this protein is Chorismate synthase.